The chain runs to 763 residues: Exo-1,4-beta-xylosidase bxlB (763 aa).

The first 23 residues, 1–23, serve as a signal peptide directing secretion; that stretch reads MAVFKSWNLALLSSLFIPALCQS. An N-linked (GlcNAc...) asparagine glycan is attached at N63. D288 is a catalytic residue. Residues N340, N408, N419, N458, N621, and N760 are each glycosylated (N-linked (GlcNAc...) asparagine).

It belongs to the glycosyl hydrolase 3 family.

Its subcellular location is the secreted. It carries out the reaction Hydrolysis of (1-&gt;4)-beta-D-xylans, to remove successive D-xylose residues from the non-reducing termini.. It participates in glycan degradation; xylan degradation. Functionally, xylan 1,4-beta-xylosidase involved in the hydrolysis of xylan, a major structural heterogeneous polysaccharide found in plant biomass representing the second most abundant polysaccharide in the biosphere, after cellulose. Active against rye arabinoxylan and xylohexaose, but not paranitrophenyl-beta-xyloside. This Emericella nidulans (strain FGSC A4 / ATCC 38163 / CBS 112.46 / NRRL 194 / M139) (Aspergillus nidulans) protein is Exo-1,4-beta-xylosidase bxlB (bxlB).